The following is a 77-amino-acid chain: Acyl carrier protein (77 aa).

In terms of domain architecture, Carrier spans 1–76; sequence MATFDDVKAV…DVVNYIDNLK (76 aa). Position 36 is an O-(pantetheine 4'-phosphoryl)serine (S36).

Belongs to the acyl carrier protein (ACP) family. In terms of processing, 4'-phosphopantetheine is transferred from CoA to a specific serine of apo-ACP by AcpS. This modification is essential for activity because fatty acids are bound in thioester linkage to the sulfhydryl of the prosthetic group.

The protein localises to the cytoplasm. It functions in the pathway lipid metabolism; fatty acid biosynthesis. Its function is as follows. Carrier of the growing fatty acid chain in fatty acid biosynthesis. This is Acyl carrier protein from Campylobacter jejuni subsp. jejuni serotype O:6 (strain 81116 / NCTC 11828).